A 690-amino-acid polypeptide reads, in one-letter code: Ras guanyl-releasing protein 3 (690 aa).

Residues 3–125 enclose the N-terminal Ras-GEF domain; the sequence is SSGLGKAATL…SLIDISSIPS (123 aa). Residues 152 to 383 enclose the Ras-GEF domain; sequence EPIELAEHLT…YKLSLVLEPR (232 aa). 2 EF-hand domains span residues 420-455 and 458-484; these read HIRK…FPFL and FCVL…AKSQ. 9 residues coordinate Ca(2+): Asp433, Asp435, Asp437, Tyr439, Asp444, Asp462, Asp464, Asp466, and Glu473. The Phorbol-ester/DAG-type zinc finger occupies 494 to 544; the sequence is IHNFQEMTYLKPTFCEHCAGFLWGIIKQGYKCKDCGANCHKQCKDLLVLAC. Residues 667-690 are disordered; sequence VDRGTEFELDQDEGEETRQDGEDG.

It belongs to the RASGRP family.

Guanine nucleotide exchange factor (GEF) for Ras and Rap1. This Homo sapiens (Human) protein is Ras guanyl-releasing protein 3 (RASGRP3).